A 151-amino-acid polypeptide reads, in one-letter code: FUN14 domain-containing protein 1 (151 aa).

The YXXL motif lies at 14-17 (YEVL). The next 3 helical transmembrane spans lie at 44–64 (YSVA…GFLF), 71–91 (AATA…GGYI), and 130–150 (FIKK…LGLA).

Belongs to the FUN14 family.

It is found in the mitochondrion outer membrane. Acts as an activator of hypoxia-induced mitophagy, an important mechanism for mitochondrial quality control. This chain is FUN14 domain-containing protein 1 (fundc1), found in Xenopus tropicalis (Western clawed frog).